The primary structure comprises 328 residues: Beta-ketoacyl-[acyl-carrier-protein] synthase III (328 aa).

Residues cysteine 122 and histidine 255 contribute to the active site. The segment at glutamine 256–arginine 260 is ACP-binding. The active site involves asparagine 285.

This sequence belongs to the thiolase-like superfamily. FabH family. As to quaternary structure, homodimer.

The protein localises to the cytoplasm. The catalysed reaction is malonyl-[ACP] + acetyl-CoA + H(+) = 3-oxobutanoyl-[ACP] + CO2 + CoA. It functions in the pathway lipid metabolism; fatty acid biosynthesis. In terms of biological role, catalyzes the condensation reaction of fatty acid synthesis by the addition to an acyl acceptor of two carbons from malonyl-ACP. Catalyzes the first condensation reaction which initiates fatty acid synthesis and may therefore play a role in governing the total rate of fatty acid production. Possesses both acetoacetyl-ACP synthase and acetyl transacylase activities. Its substrate specificity determines the biosynthesis of branched-chain and/or straight-chain of fatty acids. The polypeptide is Beta-ketoacyl-[acyl-carrier-protein] synthase III (Polynucleobacter necessarius subsp. necessarius (strain STIR1)).